Here is a 138-residue protein sequence, read N- to C-terminus: Cellular retinoic acid-binding protein 2 (138 aa).

The Nuclear localization signal motif lies at 21-31; it reads KVLGVNVMLRK. Lysine 102 participates in a covalent cross-link: Glycyl lysine isopeptide (Lys-Gly) (interchain with G-Cter in SUMO). Position 133–135 (133–135) interacts with all-trans-retinoate; it reads RVY.

Belongs to the calycin superfamily. Fatty-acid binding protein (FABP) family. In terms of assembly, interacts with RXR and RARA. Interacts with importin alpha. Post-translationally, sumoylated in response to retinoic acid binding, sumoylation is critical for dissociation from ER and subsequent nuclear translocation.

The protein localises to the cytoplasm. Its subcellular location is the endoplasmic reticulum. It localises to the nucleus. Its function is as follows. Transports retinoic acid to the nucleus. Regulates the access of retinoic acid to the nuclear retinoic acid receptors. The polypeptide is Cellular retinoic acid-binding protein 2 (CRABP2) (Homo sapiens (Human)).